A 362-amino-acid chain; its full sequence is N5-carboxyaminoimidazole ribonucleotide synthase (362 aa).

Residues Arg-108, Lys-148, 153 to 159 (GYDGKGQ), 185 to 188 (EGFV), Glu-193, His-216, and 270 to 271 (NE) each bind ATP. Residues 112–300 (KQFLNESGIE…QFEQHIRAVA (189 aa)) enclose the ATP-grasp domain.

It belongs to the PurK/PurT family. As to quaternary structure, homodimer.

The catalysed reaction is 5-amino-1-(5-phospho-beta-D-ribosyl)imidazole + hydrogencarbonate + ATP = 5-carboxyamino-1-(5-phospho-D-ribosyl)imidazole + ADP + phosphate + 2 H(+). Its pathway is purine metabolism; IMP biosynthesis via de novo pathway; 5-amino-1-(5-phospho-D-ribosyl)imidazole-4-carboxylate from 5-amino-1-(5-phospho-D-ribosyl)imidazole (N5-CAIR route): step 1/2. Its function is as follows. Catalyzes the ATP-dependent conversion of 5-aminoimidazole ribonucleotide (AIR) and HCO(3)(-) to N5-carboxyaminoimidazole ribonucleotide (N5-CAIR). This Brucella melitensis biotype 1 (strain ATCC 23456 / CCUG 17765 / NCTC 10094 / 16M) protein is N5-carboxyaminoimidazole ribonucleotide synthase.